Reading from the N-terminus, the 163-residue chain is Nucleotide-binding protein YajQ (163 aa).

This sequence belongs to the YajQ family.

In terms of biological role, nucleotide-binding protein. In Escherichia coli O127:H6 (strain E2348/69 / EPEC), this protein is Nucleotide-binding protein YajQ.